Here is a 265-residue protein sequence, read N- to C-terminus: MALRDIFLLSMAMTAVTVQACPSACKCTVSLYGEMVVACGGMGLTEIPEDIPHRAVYLVLKDNNITKITSYSFKGLRNLQGIDLSNNKINHISSAALRHLGHLDDIDLSRNELTSVSEKLFDFPISSAKAQGRRFFVYLANNPWGCDCRMAWLAQELAGGSKTFGDRHMECATPAALAGRGLSEIPQTSFVCTGRDISFDSDGIIATPEESTAFPVAYKVAVVFGCITGLVTILLLVLTAMLYQKRRIRLGSKYELRWNKHPEFV.

The N-terminal stretch at 1–20 (MALRDIFLLSMAMTAVTVQA) is a signal peptide. Cystine bridges form between cysteine 21/cysteine 27 and cysteine 25/cysteine 39. One can recognise an LRRNT domain in the interval 21–50 (CPSACKCTVSLYGEMVVACGGMGLTEIPED). LRR repeat units lie at residues 51-75 (IPHR…SFKG), 76-99 (LRNL…ALRH), and 100-123 (LGHL…LFDF). Asparagine 64 carries N-linked (GlcNAc...) asparagine glycosylation. The LRRCT domain occupies 142–193 (NPWGCDCRMAWLAQELAGGSKTFGDRHMECATPAALAGRGLSEIPQTSFVCT). 2 disulfide bridges follow: cysteine 146–cysteine 171 and cysteine 148–cysteine 192. The helical transmembrane segment at 220–240 (VAVVFGCITGLVTILLLVLTA) threads the bilayer.

It localises to the cell membrane. Its function is as follows. Binds selectively to the Gram-positive bacteria S.aureus and S.pneumoniae. Does not adhere to the Gram-negative bacteria E.coli and S.enterica. Probably recognizes peptidoglycans expressed on the bacterial cell surface. The protein is Leucine-rich repeat-containing protein Bf66946 of Branchiostoma floridae (Florida lancelet).